The chain runs to 842 residues: Glycogen phosphorylase, muscle form (842 aa).

S2 bears the N-acetylserine mark. Position 15 is a phosphoserine; by PHK; in form phosphorylase A (S15). Residues D43 and Y76 each contribute to the AMP site. Phosphotyrosine is present on residues Y204 and Y227. Position 310–319 (310–319) interacts with AMP; the sequence is RRFKSSKFGS. Position 430 is a phosphoserine (S430). The residue at position 473 (Y473) is a Phosphotyrosine. S514 carries the post-translational modification Phosphoserine. An N6-(pyridoxal phosphate)lysine modification is found at K681. 2 positions are modified to phosphoserine: S747 and S748.

It belongs to the glycogen phosphorylase family. Homodimer. Homotetramer; to form the enzymatically active phosphorylase A. It depends on pyridoxal 5'-phosphate as a cofactor. Phosphorylation of Ser-15 converts phosphorylase B (unphosphorylated) to phosphorylase A.

The catalysed reaction is [(1-&gt;4)-alpha-D-glucosyl](n) + phosphate = [(1-&gt;4)-alpha-D-glucosyl](n-1) + alpha-D-glucose 1-phosphate. With respect to regulation, allosterically regulated through the non-covalent binding of metabolites, being activated by AMP and inhibited by ATP, ADP, and glucose-6-phosphate. The activity is also controlled by post-translational modifications including phosphorylation. Allosteric enzyme that catalyzes the rate-limiting step in glycogen catabolism, the phosphorolytic cleavage of glycogen to produce glucose-1-phosphate, and plays a central role in maintaining cellular and organismal glucose homeostasis. This chain is Glycogen phosphorylase, muscle form, found in Mus musculus (Mouse).